The following is a 1002-amino-acid chain: ATP-dependent DNA helicase MPH1 (1002 aa).

Residues 108 to 275 (IVRCALFENV…EVVNNLHISK (168 aa)) enclose the Helicase ATP-binding domain. 121-128 (IPTGTGKT) provides a ligand contact to ATP. The DEAH box motif lies at 223-226 (DEAH). In terms of domain architecture, Helicase C-terminal spans 506–669 (DEETYIRKNK…ALEYTKSDRI (164 aa)). The span at 531-551 (ENRVEEEKKRQKEQAKLERTG) shows a compositional bias: basic and acidic residues. Disordered stretches follow at residues 531 to 569 (ENRVEEEKKRQKEQAKLERTGRRTGSSEEAQLSGMNQKQ) and 799 to 843 (AKSQ…DSHT). Residues 553–568 (RTGSSEEAQLSGMNQK) are compositionally biased toward polar residues.

This sequence belongs to the DEAD box helicase family. DEAH subfamily. FANCM sub-subfamily. In terms of assembly, interacts with the MHF histone-fold complex to form the FANCM-MHF complex.

The protein resides in the nucleus. It catalyses the reaction ATP + H2O = ADP + phosphate + H(+). Functionally, ATP-dependent DNA helicase involved in DNA damage repair by homologous recombination and in genome maintenance. Capable of unwinding D-loops. Plays a role in limiting crossover recombinants during mitotic DNA double-strand break (DSB) repair. Component of a FANCM-MHF complex which promotes gene conversion at blocked replication forks, probably by reversal of the stalled fork. The sequence is that of ATP-dependent DNA helicase MPH1 from Kluyveromyces lactis (strain ATCC 8585 / CBS 2359 / DSM 70799 / NBRC 1267 / NRRL Y-1140 / WM37) (Yeast).